Here is a 234-residue protein sequence, read N- to C-terminus: UDP-2,3-diacylglucosamine hydrolase (234 aa).

Mn(2+)-binding residues include Asp9, His11, Asp42, Asn80, and His115. 80–81 (NR) serves as a coordination point for substrate. The substrate site is built by Asp123, Ser161, Lys165, Lys168, and His196. Residues His196 and His198 each coordinate Mn(2+).

Belongs to the LpxH family. Requires Mn(2+) as cofactor.

Its subcellular location is the cell inner membrane. The enzyme catalyses UDP-2-N,3-O-bis[(3R)-3-hydroxytetradecanoyl]-alpha-D-glucosamine + H2O = 2-N,3-O-bis[(3R)-3-hydroxytetradecanoyl]-alpha-D-glucosaminyl 1-phosphate + UMP + 2 H(+). Its pathway is glycolipid biosynthesis; lipid IV(A) biosynthesis; lipid IV(A) from (3R)-3-hydroxytetradecanoyl-[acyl-carrier-protein] and UDP-N-acetyl-alpha-D-glucosamine: step 4/6. In terms of biological role, hydrolyzes the pyrophosphate bond of UDP-2,3-diacylglucosamine to yield 2,3-diacylglucosamine 1-phosphate (lipid X) and UMP by catalyzing the attack of water at the alpha-P atom. Involved in the biosynthesis of lipid A, a phosphorylated glycolipid that anchors the lipopolysaccharide to the outer membrane of the cell. This chain is UDP-2,3-diacylglucosamine hydrolase, found in Haemophilus ducreyi (strain 35000HP / ATCC 700724).